Consider the following 481-residue polypeptide: MDIQKNTSLTFLFYDYETFGKNPALDKPSQFSCIQTDIDFNIIGSIQEIFCYPSVDYLPDPESVLITGISPKYTSLFGVNEFEFAKKIYSLFMKSDTCIIGYNNIYFDDEFTRNIFYRNFLNSYEWSWKNGNSRWDMLDLLRACYVLRPEGINWPRNEDNSVSLRLSDISLANNIVHNVAHNASSDVYATMNIAKLIKQKKPKLFNFFFKYRTKKAILTLIDVNSLNPIVYISRFFGVVNRYISYIVPILWHPINSNILVSIDLSQDVQKILNFFKRNSILNVNYKEIFLMGIRFIYVNRCPILIPTNVIRMKDRIRLRINYKLFQNNLVLLRKNIFLKKKLKKFLCSIAEAPKYNGSNVDLKMYNSFFSYIDNNVIKNIHSTLPKRIKINFMKYDNRINQLFILFLARYRPDMLDYSEKYFWIQRYLNIFSYANIQKYENKILKLIVKYKNHVRNVQLLEELFEYVKYTRKNFLKSIFTN.

Residues 12–193 (LFYDYETFGK…SSDVYATMNI (182 aa)) enclose the Exonuclease domain. 3 residues coordinate Mg(2+): D15, E17, and D186. E17 lines the substrate pocket. The ExoI SH3-like domain maps to 202 to 350 (PKLFNFFFKY…KLKKFLCSIA (149 aa)). The ExoI C-terminal domain occupies 356–471 (NGSNVDLKMY…ELFEYVKYTR (116 aa)).

As to quaternary structure, monomer. Interacts with ssb (via C-terminus); this interaction stimulates the exonuclease activity by recruiting the enzyme to its substrate. It depends on Mg(2+) as a cofactor.

It catalyses the reaction Exonucleolytic cleavage in the 3'- to 5'-direction to yield nucleoside 5'-phosphates.. Degrades single-stranded DNA (ssDNA) in a highly processive manner. Also functions as a DNA deoxyribophosphodiesterase that releases deoxyribose-phosphate moieties following the cleavage of DNA at an apurinic/apyrimidinic (AP) site by either an AP endonuclease or AP lyase. The polypeptide is Exodeoxyribonuclease I (sbcB) (Buchnera aphidicola subsp. Baizongia pistaciae (strain Bp)).